The following is a 329-amino-acid chain: Malate dehydrogenase (329 aa).

12-18 (GAAGQIG) contributes to the NAD(+) binding site. Arg93 and Arg99 together coordinate substrate. Residues Asn106, Gln113, and 130–132 (VGN) contribute to the NAD(+) site. The substrate site is built by Asn132 and Arg163. The active-site Proton acceptor is His188.

This sequence belongs to the LDH/MDH superfamily. MDH type 2 family.

The catalysed reaction is (S)-malate + NAD(+) = oxaloacetate + NADH + H(+). With respect to regulation, strongly inhibited by Hg(2+) and Zn(2+). Activated by Na(+), NH(4)(+), Ca(2+), Cu(2+) and Mg(2+). Its function is as follows. Catalyzes the reversible oxidation of malate to oxaloacetate. Exhibits remarkably higher catalytic efficiency for oxaloacetate reduction than for malate oxidation in vitro. Highly specific for NAD(H). Can also use NADPH for oxaloacetate reduction, but catalytic efficiency is 97-fold higher with NADH. No activity detected with NADP(+) and malate. This chain is Malate dehydrogenase, found in Streptomyces avermitilis (strain ATCC 31267 / DSM 46492 / JCM 5070 / NBRC 14893 / NCIMB 12804 / NRRL 8165 / MA-4680).